Here is a 207-residue protein sequence, read N- to C-terminus: Small ribosomal subunit protein uS4A (207 aa).

The S4 RNA-binding domain maps to 98-158; that stretch reads TRLDNVAYRL…EKSKSSAKFK (61 aa).

It belongs to the universal ribosomal protein uS4 family. As to quaternary structure, part of the 30S ribosomal subunit. Contacts protein S5. The interaction surface between S4 and S5 is involved in control of translational fidelity.

Its function is as follows. One of the primary rRNA binding proteins, it binds directly to 16S rRNA where it nucleates assembly of the body of the 30S subunit. Functionally, with S5 and S12 plays an important role in translational accuracy. This is Small ribosomal subunit protein uS4A from Alkaliphilus oremlandii (strain OhILAs) (Clostridium oremlandii (strain OhILAs)).